The chain runs to 739 residues: Cleavage and polyadenylation specificity factor subunit 2 (739 aa).

Over residues 411–423 (VKEEETKASHGSD) the composition is skewed to basic and acidic residues. A disordered region spans residues 411 to 430 (VKEEETKASHGSDDNSSEPM).

Belongs to the metallo-beta-lactamase superfamily. RNA-metabolizing metallo-beta-lactamase-like family. CPSF2/YSH1 subfamily. Component of the CPSF complex, at least composed of CPSF160, CPSF100, CPSF73-I, CPSF73-II, CPSF30, FY and FIPS5. Forms a complex with cleavage and polyadenylation specificity factor (CPSF) subunits FY, PAPS2, CSTF50, CPSF30, CPSF73-I, CPSF73-II and CPSF160.

Its subcellular location is the nucleus. The protein resides in the cytoplasm. Its function is as follows. CPSF plays a key role in pre-mRNA 3'-end formation, recognizing the AAUAAA signal sequence and interacting with poly(A)polymerase and other factors to bring about cleavage and poly(A) addition. Required for antisense-RNA-mediated gene silencing. The protein is Cleavage and polyadenylation specificity factor subunit 2 (CPSF100) of Arabidopsis thaliana (Mouse-ear cress).